A 266-amino-acid chain; its full sequence is DLA class II histocompatibility antigen, DR-1 beta chain (266 aa).

An N-terminal signal peptide occupies residues 1 to 29; the sequence is MVCLCFLGGSWMTALMLILMVLNPPFAWA. Residues 30–124 are beta-1; that stretch reads RDTPPHFLEV…IESFTVQRRV (95 aa). Topologically, residues 30 to 227 are extracellular; it reads RDTPPHFLEV…RAQSDSAQSK (198 aa). Intrachain disulfides connect Cys44/Cys108 and Cys146/Cys202. The N-linked (GlcNAc...) asparagine glycan is linked to Asn48. Positions 125–227 are beta-2; the sequence is EPTVTVYPTK…RAQSDSAQSK (103 aa). Residues 126–214 form the Ig-like C1-type domain; the sequence is PTVTVYPTKT…EHPSLTSPVT (89 aa). Residues 228 to 250 traverse the membrane as a helical segment; the sequence is MLSGIGGFVLGLLFLAVGLFIYF. Topologically, residues 251-266 are cytoplasmic; that stretch reads RNQKGHSGLQPTGLLS.

It belongs to the MHC class II family.

It localises to the membrane. This chain is DLA class II histocompatibility antigen, DR-1 beta chain, found in Canis lupus familiaris (Dog).